Reading from the N-terminus, the 199-residue chain is Recombination protein RecR (199 aa).

The C4-type zinc finger occupies 58-73 (CQTCRILSETDLCSLC). In terms of domain architecture, Toprim spans 81 to 176 (GQLCVVEMPS…TTTRIAHGVP (96 aa)).

It belongs to the RecR family.

In terms of biological role, may play a role in DNA repair. It seems to be involved in an RecBC-independent recombinational process of DNA repair. It may act with RecF and RecO. In Nitrosococcus oceani (strain ATCC 19707 / BCRC 17464 / JCM 30415 / NCIMB 11848 / C-107), this protein is Recombination protein RecR.